Here is a 375-residue protein sequence, read N- to C-terminus: Protein RecA (375 aa).

Residue 88–95 (GPESSGKT) participates in ATP binding.

The protein belongs to the RecA family.

It is found in the cytoplasm. Can catalyze the hydrolysis of ATP in the presence of single-stranded DNA, the ATP-dependent uptake of single-stranded DNA by duplex DNA, and the ATP-dependent hybridization of homologous single-stranded DNAs. It interacts with LexA causing its activation and leading to its autocatalytic cleavage. The chain is Protein RecA from Rhodopirellula baltica (strain DSM 10527 / NCIMB 13988 / SH1).